Consider the following 964-residue polypeptide: Syndetin (964 aa).

Methionine 1 is modified (N-acetylmethionine). Residues 1–25 form a disordered region; it reads MQKIKSLMTRQGLKSPPESLNDLGA. Phosphoserine is present on serine 15. Coiled-coil stretches lie at residues 81 to 107 and 216 to 244; these read LNLQ…VADL and YSCI…LSKI. 4 positions are modified to phosphoserine: serine 494, serine 498, serine 559, and serine 561. The tract at residues 532 to 563 is disordered; that stretch reads DEETEDVLASNGYESDEQEKSAYQDYDSDSDV. Residue lysine 963 forms a Glycyl lysine isopeptide (Lys-Gly) (interchain with G-Cter in SUMO1); alternate linkage. Residue lysine 963 forms a Glycyl lysine isopeptide (Lys-Gly) (interchain with G-Cter in SUMO2); alternate linkage.

This sequence belongs to the syndetin family. In terms of assembly, component of the endosome-associated retrograde protein (EARP) complex, composed of VPS51, VPS52, VPS53 and VPS50/Syndetin. The EARP complex interacts with EIPR1. Interacts with VPS51 and VPS53 in an EIPR1-independent manner.

It localises to the recycling endosome. The protein resides in the membrane. Functionally, acts as a component of the EARP complex that is involved in endocytic recycling. The EARP complex associates with Rab4-positive endosomes and promotes recycling of internalized transferrin receptor (TFRC) to the plasma membrane. Within the EARP complex, required to tether the complex to recycling endosomes. Not involved in retrograde transport from early and late endosomes to the trans-Golgi network (TGN). The protein is Syndetin of Mus musculus (Mouse).